Here is a 288-residue protein sequence, read N- to C-terminus: Zinc finger protein 42 (288 aa).

Basic and acidic residues-rich tracts occupy residues 1 to 11 (MNEQKMNEQMK) and 26 to 38 (ALDRLTLKQDEAR). A disordered region spans residues 1-48 (MNEQKMNEQMKKTAKTSGQKGPGGRALDRLTLKQDEARPVQNTRVEAP). 4 C2H2-type zinc fingers span residues 170–194 (LECPQAGCKKKLRGKTALRKHMLVH), 199–221 (HVCAECGKAFTESSKLKRHFLVH), 227–251 (YQCTFEGCGKRFSLDFNLRTHIRIH), and 258–281 (VCPFDGCEKSFIQSNNQKIHILTH). Glycyl lysine isopeptide (Lys-Gly) (interchain with G-Cter in ubiquitin) cross-links involve residues K213 and K215.

Belongs to the krueppel C2H2-type zinc-finger protein family. Post-translationally, polyubiquitinated by RNF12, leading to proteasomal degradation. As to expression, restricted to testis, to germ cells in the early stages of spermatogenesis. Not expressed in spermatids, nor spermatozoa. Expressed in embryonic stem (ES) cells.

It localises to the nucleus. Its function is as follows. Involved in the reprogramming of X-chromosome inactivation during the acquisition of pluripotency. Required for efficient elongation of TSIX, a non-coding RNA antisense to XIST. Binds DXPas34 enhancer within the TSIX promoter. Involved in ES cell self-renewal. The sequence is that of Zinc finger protein 42 (Zfp42) from Mus musculus (Mouse).